A 253-amino-acid chain; its full sequence is 5-oxoprolinase subunit A (253 aa).

This sequence belongs to the LamB/PxpA family. Forms a complex composed of PxpA, PxpB and PxpC.

It carries out the reaction 5-oxo-L-proline + ATP + 2 H2O = L-glutamate + ADP + phosphate + H(+). Its function is as follows. Catalyzes the cleavage of 5-oxoproline to form L-glutamate coupled to the hydrolysis of ATP to ADP and inorganic phosphate. The sequence is that of 5-oxoprolinase subunit A from Bacillus cereus (strain ATCC 10987 / NRS 248).